Here is a 220-residue protein sequence, read N- to C-terminus: Deoxyribose-phosphate aldolase (220 aa).

Residue D89 is the Proton donor/acceptor of the active site. Catalysis depends on K151, which acts as the Schiff-base intermediate with acetaldehyde. K180 serves as the catalytic Proton donor/acceptor.

This sequence belongs to the DeoC/FbaB aldolase family. DeoC type 1 subfamily.

The protein localises to the cytoplasm. The enzyme catalyses 2-deoxy-D-ribose 5-phosphate = D-glyceraldehyde 3-phosphate + acetaldehyde. It functions in the pathway carbohydrate degradation; 2-deoxy-D-ribose 1-phosphate degradation; D-glyceraldehyde 3-phosphate and acetaldehyde from 2-deoxy-alpha-D-ribose 1-phosphate: step 2/2. Its function is as follows. Catalyzes a reversible aldol reaction between acetaldehyde and D-glyceraldehyde 3-phosphate to generate 2-deoxy-D-ribose 5-phosphate. The protein is Deoxyribose-phosphate aldolase of Deinococcus radiodurans (strain ATCC 13939 / DSM 20539 / JCM 16871 / CCUG 27074 / LMG 4051 / NBRC 15346 / NCIMB 9279 / VKM B-1422 / R1).